Consider the following 1177-residue polypeptide: Putative ATP-dependent RNA helicase TDRD12 (1177 aa).

The 63-residue stretch at 56–118 (TLEEGQVCVV…RVVVESFMQL (63 aa)) folds into the Tudor 1 domain. In terms of domain architecture, Helicase ATP-binding spans 447–635 (WPPIARGCDV…KEFMNDPYIV (189 aa)). 460-467 (SHCESNPL) contacts ATP. A DEAH box motif is present at residues 574-577 (DEVE). The Tudor 2 domain occupies 900–999 (IVDKHMDLYA…HTLPPQAVEF (100 aa)). Positions 1098 to 1177 (EESLSQTPPR…VFKRWLSSNR (80 aa)) are disordered. Residues 1100–1115 (SLSQTPPRVTGTSPAQ) show a composition bias toward polar residues.

As to quaternary structure, component of a mRNP complex containing PIWIL2, TDRD1 and piRNAs. Component of the PET complex, at least composed of EXD1, PIWIL2, TDRD12 and piRNAs.

The enzyme catalyses ATP + H2O = ADP + phosphate + H(+). Its function is as follows. Probable ATP-binding RNA helicase required during spermatogenesis to repress transposable elements and preventing their mobilization, which is essential for the germline integrity. Acts via the piRNA metabolic process, which mediates the repression of transposable elements during meiosis by forming complexes composed of piRNAs and Piwi proteins and governs the methylation and subsequent repression of transposons. Involved in the secondary piRNAs metabolic process. Acts via the PET complex, a multiprotein complex required during the secondary piRNAs metabolic process for the PIWIL2 slicing-triggered loading of PIWIL4 piRNAs. The chain is Putative ATP-dependent RNA helicase TDRD12 (TDRD12) from Homo sapiens (Human).